We begin with the raw amino-acid sequence, 180 residues long: Ribosome-recycling factor (180 aa).

The segment at 135-156 is disordered; it reads SDLKKDNDLSEDSRHRTEDDIQ.

This sequence belongs to the RRF family.

It is found in the cytoplasm. In terms of biological role, responsible for the release of ribosomes from messenger RNA at the termination of protein biosynthesis. May increase the efficiency of translation by recycling ribosomes from one round of translation to another. This Oenococcus oeni (strain ATCC BAA-331 / PSU-1) protein is Ribosome-recycling factor.